A 586-amino-acid polypeptide reads, in one-letter code: Aspartate--tRNA ligase (586 aa).

Residue E171 participates in L-aspartate binding. Residues 195–198 (QLFK) form an aspartate region. R217 contacts L-aspartate. ATP is bound by residues 217-219 (RDE) and Q226. Residue H448 coordinates L-aspartate. Position 482 (E482) interacts with ATP. Residue R489 coordinates L-aspartate. Residue 534–537 (GLDR) coordinates ATP.

It belongs to the class-II aminoacyl-tRNA synthetase family. Type 1 subfamily. In terms of assembly, homodimer.

The protein localises to the cytoplasm. It catalyses the reaction tRNA(Asp) + L-aspartate + ATP = L-aspartyl-tRNA(Asp) + AMP + diphosphate. In terms of biological role, catalyzes the attachment of L-aspartate to tRNA(Asp) in a two-step reaction: L-aspartate is first activated by ATP to form Asp-AMP and then transferred to the acceptor end of tRNA(Asp). The chain is Aspartate--tRNA ligase from Buchnera aphidicola subsp. Acyrthosiphon pisum (strain APS) (Acyrthosiphon pisum symbiotic bacterium).